Reading from the N-terminus, the 225-residue chain is Heptaprenylglyceryl phosphate synthase (225 aa).

Lys-6 is a sn-glycerol 1-phosphate binding site. Mg(2+) contacts are provided by Asp-8 and Thr-34. Residues 153–158, Gly-183, and 203–204 contribute to the sn-glycerol 1-phosphate site; these read YVEYSG and GN.

Belongs to the GGGP/HepGP synthase family. Group I subfamily. As to quaternary structure, homodimer. It depends on Mg(2+) as a cofactor.

The enzyme catalyses sn-glycerol 1-phosphate + all-trans-heptaprenyl diphosphate = 3-heptaprenyl-sn-glycero-1-phosphate + diphosphate. The protein operates within membrane lipid metabolism; glycerophospholipid metabolism. Functionally, prenyltransferase that catalyzes in vivo the transfer of the heptaprenyl moiety of heptaprenyl pyrophosphate (HepPP; 35 carbon atoms) to the C3 hydroxyl of sn-glycerol-1-phosphate (G1P), producing heptaprenylglyceryl phosphate (HepGP). This reaction is an ether-bond-formation step in the biosynthesis of archaea-type G1P-based membrane lipids found in Bacillales. In Listeria innocua serovar 6a (strain ATCC BAA-680 / CLIP 11262), this protein is Heptaprenylglyceryl phosphate synthase.